The sequence spans 233 residues: Octanoyltransferase (233 aa).

Residues 33-216 (GRAQDTVILL…HLVRALSSNG (184 aa)) enclose the BPL/LPL catalytic domain. Substrate-binding positions include 71–78 (RGGRITWH), 146–148 (AIG), and 159–161 (GFA). Cys177 serves as the catalytic Acyl-thioester intermediate.

It belongs to the LipB family.

It localises to the cytoplasm. The catalysed reaction is octanoyl-[ACP] + L-lysyl-[protein] = N(6)-octanoyl-L-lysyl-[protein] + holo-[ACP] + H(+). Its pathway is protein modification; protein lipoylation via endogenous pathway; protein N(6)-(lipoyl)lysine from octanoyl-[acyl-carrier-protein]: step 1/2. In terms of biological role, catalyzes the transfer of endogenously produced octanoic acid from octanoyl-acyl-carrier-protein onto the lipoyl domains of lipoate-dependent enzymes. Lipoyl-ACP can also act as a substrate although octanoyl-ACP is likely to be the physiological substrate. The chain is Octanoyltransferase from Clavibacter michiganensis subsp. michiganensis (strain NCPPB 382).